The chain runs to 158 residues: MVLKSKGSVLDLEHDNQTLKDYISVFERNKMRLTQSRLMLLQCLVQHRDWHTLAELKHHLEQNQQRTTLASIYNNLKIFAKLKLINIFVDTNRFETYYCLRHENHKHIYFFDENQRKFLTLPLQDKEALSLIGHKSKHGKIKLNDFYIVASGTLEDDQ.

This is an uncharacterized protein from Mycoplasma pneumoniae (strain ATCC 29342 / M129 / Subtype 1) (Mycoplasmoides pneumoniae).